Consider the following 777-residue polypeptide: MQCLFLEERIKKEGCVVLFAEAFRPSFANIQGFLTTIAEPVSRLSLMHEYRMTYFSLGAAASASISVSEVIQFLDDHVYFFRDKCFASYRESVCAFAEMYMSRCNLARVVIDESRTLLECKDIVTAKTLLKDRVVRSLCCQPKETVGEDACPHFLLKSRAAARVVAERCVLLGYPLQQQYEYEKDTSIRNVNIALKSQTRPRPYQIAAVDAAASDGALRSGCIVLPCGSGKTLVGIMLLCKVKKPTLILCAGGVSVEQWRNQILEFASVCAPANNEEGDPSNSTTGEKVRTAAVGAARISCLTGKQKDEITDETDIVLTTYSMLVTAHKAQARCQVEGFEMNADGRGRNPRRANPKERLFQPYGLLIMDEVHMMPADAYKDSLGFINAKGVVGLTATYVREDSKIRDLFHLVGPKLFDISWERLASSGYLAHVTCIEVLTPLARRFSLEYLERSSELTSPQHGTPLLVMLAAANPNKMLCVMEIVKRHVAESSKILVFCDHIMLLKEYSKLLGAPVVCGDTPHRERLMIFSDFQSTSKVNVVCLSRVGDVSVNLPSANVVVQVSSHGGSRRQEAQRLGRILRPKEKASNGKPTDAWFYTVISTDTVEMSYAAHRTAFLVDQGYTCSVTEFNPDGAPEAAVEGVDDTAPGDVVSIRQAKLRGTFKKQELKCSVASPTAQGSVNPRSLDYQEKLLCRVVASWELDYQNATSQQNEPGVANDTATGLIDKKMKRARDETAEDIKREWNSGAQTTQPRGDFCRLPLQRLVGANDDVVYHES.

Positions 212-416 (AASDGALRSG…DLFHLVGPKL (205 aa)) constitute a Helicase ATP-binding domain. ATP is bound at residue 225 to 232 (LPCGSGKT). The DEVH box signature appears at 369–372 (DEVH). The Helicase C-terminal domain maps to 484–631 (IVKRHVAESS…GYTCSVTEFN (148 aa)).

This sequence belongs to the helicase family. RAD25/XPB subfamily.

It catalyses the reaction Couples ATP hydrolysis with the unwinding of duplex DNA by translocating in the 3'-5' direction.. The catalysed reaction is ATP + H2O = ADP + phosphate + H(+). Its function is as follows. ATP-dependent 3'-5' DNA helicase/translocase; binds dsDNA rather than ssDNA, unzipping it in a translocase rather than classical helicase activity. Involved in nucleotide excision repair (NER) of damaged DNA. XPB-R is a paralog of XBP, but is not a component of the TFIIH basal transcription factor and is dispensable for RNA polymerase II transcription. This Trypanosoma brucei brucei (strain 927/4 GUTat10.1) protein is DNA repair helicase/translocase XPB-R.